Here is a 693-residue protein sequence, read N- to C-terminus: Elongation factor G (693 aa).

A tr-type G domain is found at 8–282 (EKTRNIGIMA…AVIDYLPSPL (275 aa)). GTP-binding positions include 17 to 24 (AHVDAGKT), 81 to 85 (DTPGH), and 135 to 138 (NKMD).

The protein belongs to the TRAFAC class translation factor GTPase superfamily. Classic translation factor GTPase family. EF-G/EF-2 subfamily.

It localises to the cytoplasm. Its function is as follows. Catalyzes the GTP-dependent ribosomal translocation step during translation elongation. During this step, the ribosome changes from the pre-translocational (PRE) to the post-translocational (POST) state as the newly formed A-site-bound peptidyl-tRNA and P-site-bound deacylated tRNA move to the P and E sites, respectively. Catalyzes the coordinated movement of the two tRNA molecules, the mRNA and conformational changes in the ribosome. The polypeptide is Elongation factor G (Streptococcus suis (strain 05ZYH33)).